A 274-amino-acid polypeptide reads, in one-letter code: Formamidopyrimidine-DNA glycosylase (274 aa).

Pro-2 functions as the Schiff-base intermediate with DNA in the catalytic mechanism. Glu-3 acts as the Proton donor in catalysis. Catalysis depends on Lys-56, which acts as the Proton donor; for beta-elimination activity. Residues His-89, Arg-107, and Lys-148 each contribute to the DNA site. The segment at 233–267 (LAYGRAREMCVNCETTLENLKLGQRASVFCPQCQP) adopts an FPG-type zinc-finger fold. Residue Arg-257 is the Proton donor; for delta-elimination activity of the active site.

The protein belongs to the FPG family. Monomer. The cofactor is Zn(2+).

The enzyme catalyses Hydrolysis of DNA containing ring-opened 7-methylguanine residues, releasing 2,6-diamino-4-hydroxy-5-(N-methyl)formamidopyrimidine.. It carries out the reaction 2'-deoxyribonucleotide-(2'-deoxyribose 5'-phosphate)-2'-deoxyribonucleotide-DNA = a 3'-end 2'-deoxyribonucleotide-(2,3-dehydro-2,3-deoxyribose 5'-phosphate)-DNA + a 5'-end 5'-phospho-2'-deoxyribonucleoside-DNA + H(+). Its function is as follows. Involved in base excision repair of DNA damaged by oxidation or by mutagenic agents. Acts as a DNA glycosylase that recognizes and removes damaged bases. Has a preference for oxidized purines, such as 7,8-dihydro-8-oxoguanine (8-oxoG). Has AP (apurinic/apyrimidinic) lyase activity and introduces nicks in the DNA strand. Cleaves the DNA backbone by beta-delta elimination to generate a single-strand break at the site of the removed base with both 3'- and 5'-phosphates. In Acinetobacter baumannii (strain SDF), this protein is Formamidopyrimidine-DNA glycosylase.